Reading from the N-terminus, the 307-residue chain is Malate dehydrogenase (307 aa).

NAD(+) is bound by residues 8 to 13 and Asp-32; that span reads GAGNVG. Residues Arg-81 and Arg-87 each contribute to the substrate site. NAD(+) contacts are provided by residues Asn-94 and 117-119; that span reads VSN. 2 residues coordinate substrate: Asn-119 and Arg-150. Residue His-174 is the Proton acceptor of the active site.

This sequence belongs to the LDH/MDH superfamily. MDH type 3 family.

It carries out the reaction (S)-malate + NAD(+) = oxaloacetate + NADH + H(+). Functionally, catalyzes the reversible oxidation of malate to oxaloacetate. The sequence is that of Malate dehydrogenase from Dehalococcoides mccartyi (strain ATCC BAA-2266 / KCTC 15142 / 195) (Dehalococcoides ethenogenes (strain 195)).